The primary structure comprises 376 residues: Succinyl-diaminopimelate desuccinylase (376 aa).

His-66 lines the Zn(2+) pocket. Asp-68 is an active-site residue. Asp-99 contributes to the Zn(2+) binding site. Glu-133 serves as the catalytic Proton acceptor. 3 residues coordinate Zn(2+): Glu-134, Glu-162, and His-348.

This sequence belongs to the peptidase M20A family. DapE subfamily. As to quaternary structure, homodimer. Zn(2+) serves as cofactor. Requires Co(2+) as cofactor.

It carries out the reaction N-succinyl-(2S,6S)-2,6-diaminopimelate + H2O = (2S,6S)-2,6-diaminopimelate + succinate. It participates in amino-acid biosynthesis; L-lysine biosynthesis via DAP pathway; LL-2,6-diaminopimelate from (S)-tetrahydrodipicolinate (succinylase route): step 3/3. Catalyzes the hydrolysis of N-succinyl-L,L-diaminopimelic acid (SDAP), forming succinate and LL-2,6-diaminopimelate (DAP), an intermediate involved in the bacterial biosynthesis of lysine and meso-diaminopimelic acid, an essential component of bacterial cell walls. This Xanthomonas euvesicatoria pv. vesicatoria (strain 85-10) (Xanthomonas campestris pv. vesicatoria) protein is Succinyl-diaminopimelate desuccinylase.